Here is a 282-residue protein sequence, read N- to C-terminus: Small ribosomal subunit protein uS2 (282 aa).

Residues 245–265 (AEEAVEELPLPTGEAQDEASS) form a disordered region.

It belongs to the universal ribosomal protein uS2 family.

The polypeptide is Small ribosomal subunit protein uS2 (Chlamydia trachomatis serovar A (strain ATCC VR-571B / DSM 19440 / HAR-13)).